Here is a 144-residue protein sequence, read N- to C-terminus: UPF0178 protein Exig_1155 (144 aa).

A disordered region spans residues 110–144 (IRRAGGRTKGPKKRTRQEDASFEQSFSRLLTEKTD). Residues 113 to 124 (AGGRTKGPKKRT) are compositionally biased toward basic residues.

It belongs to the UPF0178 family.

The chain is UPF0178 protein Exig_1155 from Exiguobacterium sibiricum (strain DSM 17290 / CCUG 55495 / CIP 109462 / JCM 13490 / 255-15).